We begin with the raw amino-acid sequence, 428 residues long: Adenylosuccinate synthetase (428 aa).

Residues 12 to 18 and 40 to 42 contribute to the GTP site; these read GDEGKGK and GHT. Aspartate 13 functions as the Proton acceptor in the catalytic mechanism. Mg(2+) is bound by residues aspartate 13 and glycine 40. IMP contacts are provided by residues 13-16, 38-41, threonine 130, arginine 144, glutamine 225, threonine 240, and arginine 304; these read DEGK and NAGH. Histidine 41 functions as the Proton donor in the catalytic mechanism. A substrate-binding site is contributed by 300–306; sequence VNTGRSR. Residues arginine 306, 332–334, and 414–416 contribute to the GTP site; these read KID and GVG.

This sequence belongs to the adenylosuccinate synthetase family. Homodimer. It depends on Mg(2+) as a cofactor.

The protein resides in the cytoplasm. It catalyses the reaction IMP + L-aspartate + GTP = N(6)-(1,2-dicarboxyethyl)-AMP + GDP + phosphate + 2 H(+). Its pathway is purine metabolism; AMP biosynthesis via de novo pathway; AMP from IMP: step 1/2. Functionally, plays an important role in the de novo pathway of purine nucleotide biosynthesis. Catalyzes the first committed step in the biosynthesis of AMP from IMP. The polypeptide is Adenylosuccinate synthetase (Clostridium beijerinckii (strain ATCC 51743 / NCIMB 8052) (Clostridium acetobutylicum)).